We begin with the raw amino-acid sequence, 452 residues long: Glycine receptor subunit alpha-2 (452 aa).

The signal sequence occupies residues 1–27; sequence MYRQLVNILTALFAFFLGTNHFREAFC. The Extracellular segment spans residues 28 to 256; the sequence is KDHDSRSGKH…KFHLERQMGY (229 aa). N-linked (GlcNAc...) asparagine glycosylation is present at asparagine 72. Arginine 99 contacts glycine. Position 99 (arginine 99) interacts with strychnine. Asparagine 103 carries N-linked (GlcNAc...) asparagine glycosylation. Residue serine 163 coordinates glycine. A disulfide bond links cysteine 172 and cysteine 186. Residues glutamate 226 and glutamate 228 each coordinate Zn(2+). Residues cysteine 232 and cysteine 243 are joined by a disulfide bond. Position 238 (threonine 238) interacts with glycine. Histidine 249 lines the Zn(2+) pocket. Residues 257-278 form a helical membrane-spanning segment; that stretch reads YLIQMYIPSLLIVILSWVSFWI. Topologically, residues 279-283 are cytoplasmic; the sequence is NMDAA. A helical transmembrane segment spans residues 284 to 304; it reads PARVALGITTVLTMTTQSSGS. The Extracellular segment spans residues 305–315; that stretch reads RASLPKVSYVK. The chain crosses the membrane as a helical span at residues 316–336; the sequence is AIDIWMAVCLLFVFAALLEYA. Topologically, residues 337 to 420 are cytoplasmic; the sequence is AVNFVSRQHK…FVDRAKRIDT (84 aa). Residues 421–441 traverse the membrane as a helical segment; that stretch reads ISRAAFPLAFLIFNIFYWITY. Residues 442–452 are Extracellular-facing; that stretch reads KIIRHEDVHKK.

Belongs to the ligand-gated ion channel (TC 1.A.9) family. Glycine receptor (TC 1.A.9.3) subfamily. GLRA2 sub-subfamily. In terms of assembly, interacts with GLRB. Heteropentamer composed of GLRA2 and GLRB; functional GLRB-GLRA2 heteropentamers contain four GLRA2 subunits and one GLRB subunit, although alternative subunit composition cannot be excluded. Homopentamer (in vitro). Both homopentamers and heteropentamers form functional ion channels, but their characteristics are subtly different. In terms of tissue distribution, detected in the retina inner plexiform layer (at protein level). Detected in neonate retina. Detected in brain. Detected in spinal cord, with higher levels in the dorsal horn.

The protein localises to the postsynaptic cell membrane. It is found in the synapse. Its subcellular location is the cell membrane. The protein resides in the cell projection. It carries out the reaction chloride(in) = chloride(out). Its activity is regulated as follows. Channel opening is triggered by extracellular glycine. Channel opening is also triggered by taurine and beta-alanine. Inhibited by strychnine. Inhibited by picrotoxin. Functionally, subunit of heteromeric glycine-gated chloride channels. Plays a role in synaptic plasticity. Contributes to the generation of inhibitory postsynaptic currents, and is involved in the down-regulation of neuronal excitability. Plays a role in cellular responses to ethanol. This chain is Glycine receptor subunit alpha-2, found in Mus musculus (Mouse).